We begin with the raw amino-acid sequence, 290 residues long: MEWSLTQNKLLAFHRLMRTDKPIGALLLLWPTLWALWVATPGVPQLWILAVFVAGVWLMRAAGCVVNDYADRKFDGHVKRTANRPLPSGAVTEKEARALFVVLVLISFLLVLTLNTMTILLSIAALALAWVYPFMKRYTHLPQVVLGAAFGWSIPMAFAAVSESVPLSCWLMFLANILWAVAYDTQYAMVDRDDDVKIGIKSTAILFGQYDKLIIGIFQIGVLALMAIIGELNGLGWGYYWSILVAGALFVYQQKLIANREREACFKAFMNNNYVGLVLFLGLAMSYWHF.

8 consecutive transmembrane segments (helical) span residues 23 to 43 (IGAL…TPGV), 46 to 66 (LWIL…GCVV), 99 to 119 (LFVV…TMTI), 141 to 161 (LPQV…FAAV), 163 to 183 (ESVP…AVAY), 213 to 233 (LIIG…GELN), 234 to 254 (GLGW…VYQQ), and 268 to 288 (AFMN…MSYW).

It belongs to the UbiA prenyltransferase family. It depends on Mg(2+) as a cofactor.

Its subcellular location is the cell inner membrane. It catalyses the reaction all-trans-octaprenyl diphosphate + 4-hydroxybenzoate = 4-hydroxy-3-(all-trans-octaprenyl)benzoate + diphosphate. The protein operates within cofactor biosynthesis; ubiquinone biosynthesis. Functionally, catalyzes the prenylation of para-hydroxybenzoate (PHB) with an all-trans polyprenyl group. Mediates the second step in the final reaction sequence of ubiquinone-8 (UQ-8) biosynthesis, which is the condensation of the polyisoprenoid side chain with PHB, generating the first membrane-bound Q intermediate 3-octaprenyl-4-hydroxybenzoate. The chain is 4-hydroxybenzoate octaprenyltransferase from Escherichia coli (strain UTI89 / UPEC).